Consider the following 1005-residue polypeptide: MRGSGPRGAGRRRTQGRGGGGDTPRVPASLAGCYSAPLKGPLWTCLLLCAALRTLLASPSNEVNLLDSRTVLGDLGWIAFPKNGWEEIGEVDENYAPIHTYQVCKVMEQNQNNWLLTSWISNEGASRIFIELKFTLRDCNSLPGGLGTCKETFNMYYFESDDENGRNIKDNQYIKIDTIAADESFTELDLGDRVMKLNTEVRDVGPLSKKGFYLAFQDVGACIALVSVRVYYKKCPSVVRHLAVFPDTITGADSSQLLEVSGSCVNHSVTDDPPKMHCSAEGEWLVPIGKCMCKAGYEEKNGTCQVCRPGFFKASPHSQTCSKCPPHSYTHEEASTSCVCEKDYFRRESDPPTMACTRPPSAPRNAISNVNETSVFLEWIPPADTGGGKDVSYYILCKKCNSHAGVCEECGGHVRYLPQQIGLKNTSVMMADPLAHTNYTFEIEAVNGVSDLSPGTRQYVSVNVTTNQAAPSPVTNVKKGKIAKNSISLSWQEPDRPNGIILEYEIKYFEKDQETSYTIIKSKETTITAEGLKPASVYVFQIRARTAAGYGVFSRRFEFETTPVFGASNDQSQIPIIGVSVTVGVILLAVMIGFLLSGSCCECGCGRASSLCAVAHPSLIWRCGYSKAKQDPEEEKMHFHNGHIKLPGVRTYIDPHTYEDPTQAVHEFGKEIEASCITIERVIGAGEFGEVCSGRLKLPGKRELPVATKTLKVGYTEKQRRDFLSEASIMGQFDHPNIIHLEGVVTKSKPVMIVTEYMENGSLDTFLKKNDGQFTVIQLVGMLRGIAAGMKYLSDMGYVHRDLAARNILINSNLVCKVSDFGLSRVLEDDPEAAYTTRGGKIPIRWTAPEAIAFRKFTSASDVWSYGIVMWEVVSYGERPYWEMTNQDVIKAVEEGYRLPSPMDCPAALYQLMLDCWQKDRNSRPKFDDIVNMLDKLIRNPSSLKTLVNASSRVSTLLAEHGSLGSGAYRSVGEWLEATKMGRYTEIFMENGYSSMDAVAQVTLE.

The interval Met-1 to Pro-24 is disordered. The signal sequence occupies residues Met-1–Val-26. The Extracellular portion of the chain corresponds to Pro-27–Pro-575. The 179-residue stretch at Glu-62–Arg-240 folds into the Eph LBD domain. Residues Asn-266, Asn-301, Asn-371, Asn-425, Asn-438, and Asn-463 are each glycosylated (N-linked (GlcNAc...) asparagine). 2 consecutive Fibronectin type-III domains span residues Pro-359–Ala-469 and Ala-470–Val-564. Residues Ile-576–Leu-596 traverse the membrane as a helical segment. The Cytoplasmic portion of the chain corresponds to Ser-597–Glu-1005. Residues Tyr-652 and Tyr-658 each carry the phosphotyrosine; by autocatalysis modification. The Protein kinase domain occupies Ile-677–Ile-938. Residues Ile-683–Val-691 and Lys-709 contribute to the ATP site. Asp-802 functions as the Proton acceptor in the catalytic mechanism. Phosphotyrosine; by autocatalysis occurs at positions 835 and 984. One can recognise an SAM domain in the interval Gly-967–Glu-1005.

Belongs to the protein kinase superfamily. Tyr protein kinase family. Ephrin receptor subfamily. As to quaternary structure, heterotetramer upon binding of the ligand. The heterotetramer is composed of an ephrin dimer and a receptor dimer. Oligomerization is probably required to induce biological responses. Interacts (via SAM domain) with SAMD5 (via SAM domain). Post-translationally, phosphorylated. Phosphorylation is stimulated by the ligand EFNA5. Dephosphorylation upon stimulation by glucose, inhibits EPHA5 forward signaling and results in insulin secretion. In terms of tissue distribution, almost exclusively expressed in the nervous system. Predominantly expressed in neurons.

The protein localises to the cell membrane. It is found in the cell projection. The protein resides in the axon. Its subcellular location is the dendrite. It carries out the reaction L-tyrosyl-[protein] + ATP = O-phospho-L-tyrosyl-[protein] + ADP + H(+). In terms of biological role, receptor tyrosine kinase which binds promiscuously GPI-anchored ephrin-A family ligands residing on adjacent cells, leading to contact-dependent bidirectional signaling into neighboring cells. The signaling pathway downstream of the receptor is referred to as forward signaling while the signaling pathway downstream of the ephrin ligand is referred to as reverse signaling. Among GPI-anchored ephrin-A ligands, EFNA5 most probably constitutes the cognate/functional ligand for EPHA5. Functions as an axon guidance molecule during development and may be involved in the development of the retinotectal, entorhino-hippocampal and hippocamposeptal pathways. Together with EFNA5 plays also a role in synaptic plasticity in adult brain through regulation of synaptogenesis. In addition to its function in the nervous system, the interaction of EPHA5 with EFNA5 mediates communication between pancreatic islet cells to regulate glucose-stimulated insulin secretion. This Rattus norvegicus (Rat) protein is Ephrin type-A receptor 5 (Epha5).